The chain runs to 1090 residues: MSSTTRRRSAWVAAATVGVSSFLAVAGITPAIAAAGAGQPATVTVPAASPVRAAVDGEYAQRFLAQYDKIKDPANGYFSAQGIPYHAVETLMVEAPDYGHETTSEAYSYWLWLEALYGQVTQDWAPLNHAWDTMEKYMIPQSVDQPTNSFYNPNSPATYAPEFNHPSSYPSQLNSGISGGTDPIGAELKATYGNADVYQMHWLADVDNIYGFGATPGAGCTLGPTATGTSFINTFQRGPQESVWETVPQPSCEEFKYGGKNGYLDLFTKDASYAKQWKYTSASDADARAVEAVYWANQWATEQGKAADVAATVAKAAKMGDYLRYTLFDKYFKKIGCTSPTCAAGQGREAAHYLLSWYMAWGGATDTSSGWAWRIGSSHAHFGYQNPLAAWALSTDPKLTPKSPTAKADWAASMQRQLEFYTWLQASNGGIAGGATNSWDGAYAQPPAGTPTFYGMGYTEAPVYVDPPSNRWFGMQAWGVQRVAELYYASGNAQAKKILDKWVPWVVANISTDGASWKVPSELKWTGKPDTWNAAAPTGNPGLTVEVTSYGQDVGVAADTARALLFYAAKSGDTASRDKAKALLDAIWANNQDPLGVSAVETRGDYKRFDDTYVANGDGIYIPSGWTGTMPNGDVIKPGVSFLDIRSFYKKDPNWSKVQTFLDGGAEPQFRYHRFWAQTAVAGALADYARLFDDGTTTPDTTAPTVPTGLQAGVVTSTEATISWTASTDDTRVTGYDVYRGATKVGTATTTSFTDTGLTASTAYAYTVRAFDAAGNVSAPSAALTVTTKATPSDTTAPSVPAITSSSSTANSVTIGWSASTDNAGGSGLAGYDVYRGATRVAQTTALTFTDTGLTASTAYEYTVRARDVAGNVSAPSTAVSVTTKSDTTPDTTAPSVPAGLAAMTVTETSVALTWNASTDTGGSGLKGYDVYRGATRVGSTTTASYTDTGLTAATAYQYTVRATDNAGNVSAASAALSVTTKTPQTGGSCSVAYNASSWNSGFTASVRITNTGTTTINGWSLGFDLTAGQKVQQGWSATWTQSGSTVTATNAPWNGTLAPGQTVDVGFNGSHTGQNPNPASFTLNGASCT.

An N-terminal signal peptide occupies residues 1-33 (MSSTTRRRSAWVAAATVGVSSFLAVAGITPAIA). The propeptide occupies 34-53 (AAGAGQPATVTVPAASPVRA). Residues 54–699 (AVDGEYAQRF…RLFDDGTTTP (646 aa)) are catalytic. Asp513 (nucleophile) is an active-site residue. Fibronectin type-III domains lie at 706–791 (VPTG…TKAT), 797–887 (APSV…TKSD), and 897–984 (VPAG…TKTP). A CBM2 domain is found at 983 to 1090 (TPQTGGSCSV…SFTLNGASCT (108 aa)). Cys990 and Cys1089 are oxidised to a cystine. A disordered region spans residues 1069-1090 (NGSHTGQNPNPASFTLNGASCT). Over residues 1070-1090 (GSHTGQNPNPASFTLNGASCT) the composition is skewed to polar residues.

Belongs to the glycosyl hydrolase 48 (cellulase L) family.

The catalysed reaction is Hydrolysis of (1-&gt;4)-beta-D-glucosidic linkages in cellulose and cellotetraose, releasing cellobiose from the non-reducing ends of the chains.. In terms of biological role, hydrolyzes cellohexaose to a mixture of cellotetraose, cellotriose and cellobiose, with only a trace of glucose. It hydrolyzed cellopentaose to cellotriose and cellobiose, and cellotetraose to cellobiose, but it did not hydrolyze cellotriose. Also has weak endoglucanase activity. Hydrolyzes glucosidic bonds with inversion of anomeric configuration. The protein is Exoglucanase B (cbhB) of Cellulomonas fimi (strain ATCC 484 / DSM 20113 / JCM 1341 / CCUG 24087 / LMG 16345 / NBRC 15513 / NCIMB 8980 / NCTC 7547 / NRS-133).